Here is an 885-residue protein sequence, read N- to C-terminus: Translation initiation factor IF-2 (885 aa).

Basic and acidic residues predominate over residues 123–232 (ETEAKAKAEA…EAERYSDHHI (110 aa)). The interval 123–289 (ETEAKAKAEA…RNRSTAPESM (167 aa)) is disordered. The segment covering 253 to 266 (GRRARNKNTAKTKR) has biased composition (basic residues). Positions 267 to 276 (GGKDARDGRE) are enriched in basic and acidic residues. Residues 385–554 (PRAPVVTIMG…LLQAEVLELK (170 aa)) form the tr-type G domain. Residues 394–401 (GHVDHGKT) form a G1 region. 394 to 401 (GHVDHGKT) is a GTP binding site. Residues 419-423 (GITQH) form a G2 region. A G3 region spans residues 440-443 (DTPG). Residues 440–444 (DTPGH) and 494–497 (NKMD) contribute to the GTP site. The tract at residues 494–497 (NKMD) is G4. A G5 region spans residues 530–532 (SAK).

Belongs to the TRAFAC class translation factor GTPase superfamily. Classic translation factor GTPase family. IF-2 subfamily.

It is found in the cytoplasm. Its function is as follows. One of the essential components for the initiation of protein synthesis. Protects formylmethionyl-tRNA from spontaneous hydrolysis and promotes its binding to the 30S ribosomal subunits. Also involved in the hydrolysis of GTP during the formation of the 70S ribosomal complex. This Shewanella oneidensis (strain ATCC 700550 / JCM 31522 / CIP 106686 / LMG 19005 / NCIMB 14063 / MR-1) protein is Translation initiation factor IF-2.